Consider the following 404-residue polypeptide: Argininosuccinate synthase (404 aa).

ATP is bound by residues 10–18 (AYSGGLDTS) and Ala-37. L-citrulline-binding residues include Tyr-90 and Ser-95. Gly-120 contributes to the ATP binding site. Thr-122, Asn-126, and Asp-127 together coordinate L-aspartate. Position 126 (Asn-126) interacts with L-citrulline. L-citrulline is bound by residues Arg-130, Ser-181, Ser-190, Glu-266, and Tyr-278. Positions 173–200 (DKRGESPFSTDANLLHTSSEGKVLEDPW) are disordered. Over residues 179–192 (PFSTDANLLHTSSE) the composition is skewed to polar residues.

Belongs to the argininosuccinate synthase family. Type 1 subfamily. Homotetramer.

The protein localises to the cytoplasm. It carries out the reaction L-citrulline + L-aspartate + ATP = 2-(N(omega)-L-arginino)succinate + AMP + diphosphate + H(+). It functions in the pathway amino-acid biosynthesis; L-arginine biosynthesis; L-arginine from L-ornithine and carbamoyl phosphate: step 2/3. The polypeptide is Argininosuccinate synthase (Novosphingobium aromaticivorans (strain ATCC 700278 / DSM 12444 / CCUG 56034 / CIP 105152 / NBRC 16084 / F199)).